The sequence spans 1375 residues: Protein lingerer (1375 aa).

The segment at 1-69 (MSTQTRSGGG…KAQPKATTEQ (69 aa)) is disordered. The segment covering 53-62 (SKTDKPEKAQ) has biased composition (basic and acidic residues). In terms of domain architecture, UBA spans 84 to 124 (QINEKVLLLLTMTQRSEEEVCCALNECDYDLEAAANFLIEE). Low complexity-rich tracts occupy residues 142–161 (ANNT…GNGN) and 173–184 (SNRGGTRGSSDS). The segment at 142–286 (ANNTADGAAG…GSGRGGNANE (145 aa)) is disordered. A compositionally biased stretch (basic and acidic residues) spans 185–204 (RGWRGRETRENERNQRESRE). Gly residues predominate over residues 228 to 282 (RNGGGRSGPGGGGRGGGFVSRSGRGGGRMGGRTGGPRGDRGSGGPGGAYGSGRGG). Tyr-321 bears the Phosphotyrosine mark. A Phosphoserine modification is found at Ser-324. 2 stretches are compositionally biased toward polar residues: residues 374–387 (VQQG…SSSG) and 395–412 (ATLS…SAAV). Disordered stretches follow at residues 374 to 453 (VQQG…ASPD) and 613 to 646 (FEPL…QQQQ). Positions 426-441 (SGAGTGASAAAGGGAG) are enriched in gly residues. 2 stretches are compositionally biased toward low complexity: residues 442–453 (STPSSFVSASPD) and 629–646 (QQQQ…QQQQ). Ser-672 bears the Phosphoserine mark. Thr-673 bears the Phosphothreonine mark. Ser-674 bears the Phosphoserine mark. Low complexity predominate over residues 750 to 767 (QGYGSYQPSSYQQQAGSG). Disordered regions lie at residues 750 to 801 (QGYG…SGNA), 869 to 894 (SVST…GQTG), 987 to 1036 (KNTS…GGSG), 1203 to 1234 (SKGG…DLTS), and 1251 to 1277 (EKQS…TSAQ). A compositionally biased stretch (gly residues) spans 768–781 (AQSGTGAVSGGGGT). Low complexity-rich tracts occupy residues 789-801 (GGSS…SGNA), 869-882 (SVST…NSGS), and 987-1008 (KNTS…TGNA). Residues 1009 to 1036 (SGQGAGASTGGVGSSSGAGGAGSGGGSG) are compositionally biased toward gly residues. A compositionally biased stretch (polar residues) spans 1265-1277 (MPNTQTAGGTSAQ).

In terms of tissue distribution, at stage 11, expression is restricted to the neuroblasts, predominant in the central nervous system (CNS), including the brain and ventral nerve cord, and in the PNS. Later embryonic expression is seen in the gonads. Late third instar larvae show expression in the CNS, imaginal disks (including genital, eye-antennal, leg, wing and haltere disks), and gonads. In the larval brain, it is expressed in all of the glial cells and in clusters of neurons that projected contralaterally. In the larval ventral ganglion, it is expressed in subperineurial glia, peripheral exit glia, and a number of interneurons, but not in motor neurons. Isoform B is abundantly expressed in males and females. Isoform D is male specific and expressed at low levels.

The protein localises to the cytoplasm. Functionally, acts in the nervous system to mediate the control of copulatory organs during courtship. The polypeptide is Protein lingerer (Drosophila melanogaster (Fruit fly)).